The primary structure comprises 272 residues: Phosphatidylglycerol--prolipoprotein diacylglyceryl transferase (272 aa).

A run of 4 helical transmembrane segments spans residues 16-36 (VGLH…LSSF), 62-82 (FALG…VLFY), 97-117 (IWKG…WAAV), and 129-149 (LSVT…ALLI). A 1,2-diacyl-sn-glycero-3-phospho-(1'-sn-glycerol) is bound at residue R150. Helical transmembrane passes span 206 to 226 (GVIR…VAVI) and 246 to 266 (ILTI…GIIW).

Belongs to the Lgt family.

It is found in the cell inner membrane. It catalyses the reaction L-cysteinyl-[prolipoprotein] + a 1,2-diacyl-sn-glycero-3-phospho-(1'-sn-glycerol) = an S-1,2-diacyl-sn-glyceryl-L-cysteinyl-[prolipoprotein] + sn-glycerol 1-phosphate + H(+). It participates in protein modification; lipoprotein biosynthesis (diacylglyceryl transfer). Catalyzes the transfer of the diacylglyceryl group from phosphatidylglycerol to the sulfhydryl group of the N-terminal cysteine of a prolipoprotein, the first step in the formation of mature lipoproteins. This Chlamydia trachomatis serovar D (strain ATCC VR-885 / DSM 19411 / UW-3/Cx) protein is Phosphatidylglycerol--prolipoprotein diacylglyceryl transferase.